Here is a 338-residue protein sequence, read N- to C-terminus: CRISPR system Cmr subunit Cmr1-1 (338 aa).

The protein belongs to the CRISPR system Cmr1 family. As to quaternary structure, part of the type III-B Cmr ribonucleoprotein (RNP) complex, an elongated RNP with Cmr2 and Cmr3 as the base, with Cmr4 and Cmr5 forming a helical core along the mature crRNA (39 or 45 nt in length), while the complex is capped by Cmr6 and Cmr1. The 5' end of the crRNA is bound to Cmr2 and Cmr3, while Cmr6 and a Cmr1 subunit (Cmr1-1 or Cmr1-2) cap the 3' end of the crRNA. The target RNA lies antiparallel to the crRNA, with its 5' end near Cmr1 and Cmr6 and its 3' end near Cmr2 and Cmr3; major target cleavage occurs nears the junction of Cmr1/Cmr6 and Cmr4/Cmr, with minor cleavage occurring at 6 nt intervals which coincide with the proposed spacing of Cmr4 subunits.

The protein localises to the cytoplasm. Functionally, CRISPR (clustered regularly interspaced short palindromic repeat), is an adaptive immune system that provides protection against mobile genetic elements (viruses, transposable elements and conjugative plasmids). CRISPR clusters contain sequences complementary to antecedent mobile elements and target invading nucleic acids. CRISPR clusters are transcribed and processed into CRISPR RNA (crRNA), formerly called psiRNA (prokaryotic silencing) in this organism. Part of the Cmr ribonucleoprotein complex which has divalent cation-dependent endoribonuclease activity specific for ssRNA complementary to the crRNA (target RNA), generating 5' hydroxy- and 3' phosphate or 2'-3' cyclic phosphate termini. Cmr4 is probably the subunit that cleaves target RNA. Cmr complex does not cleave ssDNA complementary to the crRNA. Cleavage of invading RNA is guided by the crRNA; substrate cleavage occurs a fixed distance (14 nt) from the 3' end of the crRNA. In vitro reconstitution shows Cmr1-2 and Cmr5 are not absolutely necessary for target cleavage. The protein is CRISPR system Cmr subunit Cmr1-1 of Pyrococcus furiosus (strain ATCC 43587 / DSM 3638 / JCM 8422 / Vc1).